A 623-amino-acid chain; its full sequence is Xaa-Pro aminopeptidase 1 (623 aa).

Position 77 (R77) interacts with a peptide. Residue K304 is modified to N6-acetyllysine. An a peptide-binding site is contributed by H395. Positions 415, 426, and 489 each coordinate Mn(2+). 3 residues coordinate a peptide: H489, H498, and E523. The Mn(2+) site is built by E523 and E537.

It belongs to the peptidase M24B family. As to quaternary structure, homodimer. It depends on Mn(2+) as a cofactor. Expressed in all tissues tested, including liver, adrenal decapsular tissue, adrenal capsular tissue, corpus luteum, testis, submandibular gland, thymus, brain, cerebellum and heart. Highest levels in testis.

The protein resides in the cytoplasm. It carries out the reaction Release of any N-terminal amino acid, including proline, that is linked to proline, even from a dipeptide or tripeptide.. With respect to regulation, inhibited by inositol hexakisphosphate. Metalloaminopeptidase that catalyzes the removal of a penultimate prolyl residue from the N-termini of peptides, such as Arg-Pro-Pro. Contributes to the degradation of bradykinin. The polypeptide is Xaa-Pro aminopeptidase 1 (Rattus norvegicus (Rat)).